Reading from the N-terminus, the 163-residue chain is Nucleotide-binding protein Ava_2001 (163 aa).

This sequence belongs to the YajQ family.

Functionally, nucleotide-binding protein. This chain is Nucleotide-binding protein Ava_2001, found in Trichormus variabilis (strain ATCC 29413 / PCC 7937) (Anabaena variabilis).